The sequence spans 478 residues: Protein nucleotidyltransferase YdiU (478 aa).

Residues glycine 74, glycine 76, arginine 77, lysine 97, aspartate 109, glycine 110, arginine 160, and arginine 167 each coordinate ATP. Catalysis depends on aspartate 236, which acts as the Proton acceptor. Asparagine 237 and aspartate 246 together coordinate Mg(2+). Position 246 (aspartate 246) interacts with ATP.

The protein belongs to the SELO family. Mg(2+) serves as cofactor. Requires Mn(2+) as cofactor.

The catalysed reaction is L-seryl-[protein] + ATP = 3-O-(5'-adenylyl)-L-seryl-[protein] + diphosphate. It carries out the reaction L-threonyl-[protein] + ATP = 3-O-(5'-adenylyl)-L-threonyl-[protein] + diphosphate. It catalyses the reaction L-tyrosyl-[protein] + ATP = O-(5'-adenylyl)-L-tyrosyl-[protein] + diphosphate. The enzyme catalyses L-histidyl-[protein] + UTP = N(tele)-(5'-uridylyl)-L-histidyl-[protein] + diphosphate. The catalysed reaction is L-seryl-[protein] + UTP = O-(5'-uridylyl)-L-seryl-[protein] + diphosphate. It carries out the reaction L-tyrosyl-[protein] + UTP = O-(5'-uridylyl)-L-tyrosyl-[protein] + diphosphate. In terms of biological role, nucleotidyltransferase involved in the post-translational modification of proteins. It can catalyze the addition of adenosine monophosphate (AMP) or uridine monophosphate (UMP) to a protein, resulting in modifications known as AMPylation and UMPylation. In Chromobacterium violaceum (strain ATCC 12472 / DSM 30191 / JCM 1249 / CCUG 213 / NBRC 12614 / NCIMB 9131 / NCTC 9757 / MK), this protein is Protein nucleotidyltransferase YdiU.